The following is a 290-amino-acid chain: MTQQLPILSLKKIYSGKVRDLYEIDDKRMLMVTSDRLSAFDVILDDPIPRKGEILTQISNFWFNKLAHIMPNHFTGDSVYDVLPKEEADLIRDRAVVCKRLNPIKIESIVRGYLTGSGLKDYKQTGTICGLKLPEGLVEASKLPEAIFTPSSKEEVGNHDINISYAECEKLIGADLAAQVKEKAIALYTVAAEYALTKGIIICDTKFEFGLDENGTLTLMDEVLTPDSSRFWSVDTYQAGTNPPSFDKQFVRDWLENSGWNKQAPAPKVPENIIQKTVDKYQEALDLLTK.

This sequence belongs to the SAICAR synthetase family.

The catalysed reaction is 5-amino-1-(5-phospho-D-ribosyl)imidazole-4-carboxylate + L-aspartate + ATP = (2S)-2-[5-amino-1-(5-phospho-beta-D-ribosyl)imidazole-4-carboxamido]succinate + ADP + phosphate + 2 H(+). It participates in purine metabolism; IMP biosynthesis via de novo pathway; 5-amino-1-(5-phospho-D-ribosyl)imidazole-4-carboxamide from 5-amino-1-(5-phospho-D-ribosyl)imidazole-4-carboxylate: step 1/2. The polypeptide is Phosphoribosylaminoimidazole-succinocarboxamide synthase (purC) (Haemophilus influenzae (strain ATCC 51907 / DSM 11121 / KW20 / Rd)).